The chain runs to 623 residues: Chaperone protein DnaK (623 aa).

Thr-197 carries the post-translational modification Phosphothreonine; by autocatalysis. A disordered region spans residues 600–623 (KKDENAGANGGNKKDDDVIDAEVE).

It belongs to the heat shock protein 70 family.

In terms of biological role, acts as a chaperone. The chain is Chaperone protein DnaK from Campylobacter concisus (strain 13826).